A 252-amino-acid chain; its full sequence is ATP synthase subunit a (252 aa).

A run of 6 helical transmembrane segments spans residues Phe29 to Ile49, Phe87 to Phe107, Ile117 to Tyr137, Leu146 to Ile166, Phe196 to Ile216, and Val219 to Leu239.

It belongs to the ATPase A chain family. As to quaternary structure, F-type ATPases have 2 components, CF(1) - the catalytic core - and CF(0) - the membrane proton channel. CF(1) has five subunits: alpha(3), beta(3), gamma(1), delta(1), epsilon(1). CF(0) has three main subunits: a(1), b(2) and c(9-12). The alpha and beta chains form an alternating ring which encloses part of the gamma chain. CF(1) is attached to CF(0) by a central stalk formed by the gamma and epsilon chains, while a peripheral stalk is formed by the delta and b chains.

It is found in the cell inner membrane. In terms of biological role, key component of the proton channel; it plays a direct role in the translocation of protons across the membrane. In Bartonella bacilliformis (strain ATCC 35685 / KC583 / Herrer 020/F12,63), this protein is ATP synthase subunit a.